The sequence spans 310 residues: MKFTVERDILTDAVSWAARSLSPRPPVPVLSGLLITAEAGVVSIASFDYETSARLEIEADVETAGQVLVSGRLLNDIVRSLPQAQVTVELDGGKVLVTCRSSRFSLATMPVGDYPALPELPAPAGTVDGAAFAHAVAQVTVAASKDDTLPILTAVKVEIEGDTITFLATDRYRLAMKEIRWTPADPSISTSLLIKARTLTEVAKSLGSGGDLEILLGQTADLVGFASGGRRTTSVLVDGEYPKIRSLFPESSPIQAVVDTAALVEASRRVALVAERNTALRMVFTEGQVTLDAGTGDDASANESVPCTLE.

The protein belongs to the beta sliding clamp family. In terms of assembly, forms a ring-shaped head-to-tail homodimer around DNA which binds and tethers DNA polymerases and other proteins to the DNA. The DNA replisome complex has a single clamp-loading complex (3 tau and 1 each of delta, delta', psi and chi subunits) which binds 3 Pol III cores (1 core on the leading strand and 2 on the lagging strand) each with a beta sliding clamp dimer. Additional proteins in the replisome are other copies of gamma, psi and chi, Ssb, DNA helicase and RNA primase.

The protein resides in the cytoplasm. In terms of biological role, confers DNA tethering and processivity to DNA polymerases and other proteins. Acts as a clamp, forming a ring around DNA (a reaction catalyzed by the clamp-loading complex) which diffuses in an ATP-independent manner freely and bidirectionally along dsDNA. Initially characterized for its ability to contact the catalytic subunit of DNA polymerase III (Pol III), a complex, multichain enzyme responsible for most of the replicative synthesis in bacteria; Pol III exhibits 3'-5' exonuclease proofreading activity. The beta chain is required for initiation of replication as well as for processivity of DNA replication. The chain is Beta sliding clamp (dnaN) from Micrococcus luteus (Micrococcus lysodeikticus).